Reading from the N-terminus, the 175-residue chain is NADH-ubiquinone oxidoreductase chain 6 (175 aa).

5 consecutive transmembrane segments (helical) span residues 1-21 (MMTY…VGFS), 27-47 (VYGG…VMNF), 49-69 (GSFL…VVFG), 88-108 (VVLG…LYVL), and 149-169 (YGVW…VVIM).

The protein belongs to the complex I subunit 6 family. Core subunit of respiratory chain NADH dehydrogenase (Complex I) which is composed of 45 different subunits.

It is found in the mitochondrion inner membrane. It carries out the reaction a ubiquinone + NADH + 5 H(+)(in) = a ubiquinol + NAD(+) + 4 H(+)(out). Functionally, core subunit of the mitochondrial membrane respiratory chain NADH dehydrogenase (Complex I) which catalyzes electron transfer from NADH through the respiratory chain, using ubiquinone as an electron acceptor. Essential for the catalytic activity and assembly of complex I. This is NADH-ubiquinone oxidoreductase chain 6 (MT-ND6) from Pteropus dasymallus (Ryukyu flying fox).